Consider the following 182-residue polypeptide: dTTP/UTP pyrophosphatase (182 aa).

The Proton acceptor role is filled by Asp64.

The protein belongs to the Maf family. YhdE subfamily. A divalent metal cation is required as a cofactor.

The protein localises to the cytoplasm. It carries out the reaction dTTP + H2O = dTMP + diphosphate + H(+). It catalyses the reaction UTP + H2O = UMP + diphosphate + H(+). Functionally, nucleoside triphosphate pyrophosphatase that hydrolyzes dTTP and UTP. May have a dual role in cell division arrest and in preventing the incorporation of modified nucleotides into cellular nucleic acids. This is dTTP/UTP pyrophosphatase from Thermosipho melanesiensis (strain DSM 12029 / CIP 104789 / BI429).